A 253-amino-acid chain; its full sequence is Protein C1orf43 homolog (253 aa).

The chain crosses the membrane as a helical span at residues 11 to 31; sequence VNVVLVMAYGSLVFVLLFIFV. The interval 194 to 213 is disordered; sequence SGSSQRQHQSAAKDLTQSPE.

The protein resides in the membrane. It localises to the golgi apparatus. The protein localises to the mitochondrion. General regulator of phagocytosis. Required to uptake Gram negative bacterium by macrophages. This chain is Protein C1orf43 homolog, found in Bos taurus (Bovine).